The sequence spans 417 residues: Histidine--tRNA ligase (417 aa).

This sequence belongs to the class-II aminoacyl-tRNA synthetase family. Homodimer.

It is found in the cytoplasm. The catalysed reaction is tRNA(His) + L-histidine + ATP = L-histidyl-tRNA(His) + AMP + diphosphate + H(+). The polypeptide is Histidine--tRNA ligase (Acetivibrio thermocellus (strain ATCC 27405 / DSM 1237 / JCM 9322 / NBRC 103400 / NCIMB 10682 / NRRL B-4536 / VPI 7372) (Clostridium thermocellum)).